Here is a 400-residue protein sequence, read N- to C-terminus: Enoyl-[acyl-carrier-protein] reductase [NADH] 1 (400 aa).

NAD(+) is bound by residues 48–53, 74–75, 111–112, and 139–140; these read GASSGY, FE, DA, and LA. Tyr-225 contacts substrate. Catalysis depends on Tyr-235, which acts as the Proton donor. NAD(+) is bound by residues Lys-244 and 273-275; that span reads VVT.

It belongs to the TER reductase family. As to quaternary structure, monomer.

It carries out the reaction a 2,3-saturated acyl-[ACP] + NAD(+) = a (2E)-enoyl-[ACP] + NADH + H(+). The protein operates within lipid metabolism; fatty acid biosynthesis. Its function is as follows. Involved in the final reduction of the elongation cycle of fatty acid synthesis (FAS II). Catalyzes the reduction of a carbon-carbon double bond in an enoyl moiety that is covalently linked to an acyl carrier protein (ACP). The sequence is that of Enoyl-[acyl-carrier-protein] reductase [NADH] 1 from Vibrio vulnificus (strain YJ016).